An 89-amino-acid polypeptide reads, in one-letter code: Large ribosomal subunit protein bL27 (89 aa).

The segment at 1 to 21 (MAHKKAGGSSRNGRDSESKRL) is disordered.

It belongs to the bacterial ribosomal protein bL27 family.

The sequence is that of Large ribosomal subunit protein bL27 from Chelativorans sp. (strain BNC1).